A 235-amino-acid polypeptide reads, in one-letter code: Adenosine 5'-phosphosulfate reductase (235 aa).

The [4Fe-4S] cluster site is built by Cys121, Cys122, Cys204, and Cys207. Cys230 functions as the Nucleophile; cysteine thiosulfonate intermediate in the catalytic mechanism.

Belongs to the PAPS reductase family. CysH subfamily. [4Fe-4S] cluster is required as a cofactor.

The protein localises to the cytoplasm. The enzyme catalyses [thioredoxin]-disulfide + sulfite + AMP + 2 H(+) = adenosine 5'-phosphosulfate + [thioredoxin]-dithiol. The protein operates within sulfur metabolism; hydrogen sulfide biosynthesis; sulfite from sulfate. Catalyzes the formation of sulfite from adenosine 5'-phosphosulfate (APS) using thioredoxin as an electron donor. This Geobacillus thermodenitrificans (strain NG80-2) protein is Adenosine 5'-phosphosulfate reductase.